The chain runs to 792 residues: Vicilin Car i 2.0101 (792 aa).

The first 26 residues, 1 to 26, serve as a signal peptide directing secretion; that stretch reads MVTKAKIPLFLFLSALFLALVCSSLA. Disordered regions lie at residues 132–153, 182–217, 240–272, 302–325, and 350–394; these read ERRERRRGRDDDDKENPRDPRE, RFEEEQRRQEERERRRGRDNDDEENPRDPREQYRQC, ERLEEEQRKQEERERRRGRDEDDQNPRDPEQRY, EERERQRGRDRQDPQQQYHRCQRR, and QQGR…ESGE. 2 stretches are compositionally biased toward basic and acidic residues: residues 182 to 200 and 207 to 217; these read RFEEEQRRQEERERRRGRD and PRDPREQYRQC. Residues 302 to 314 are compositionally biased toward basic and acidic residues; sequence EERERQRGRDRQD. Residues 315–325 are compositionally biased toward low complexity; the sequence is PQQQYHRCQRR. Residues 350–375 show a composition bias toward basic and acidic residues; sequence QQGREWGPDQASPRRESRGREEEQQR. Tyr-379 is a binding site for Cu cation. Cupin type-1 domains lie at 384–537 and 582–754; these read QGLR…DRLE and ISLK…EEIE. 3 residues coordinate Cu cation: Cys-652, His-654, and His-698. The stretch at 727 to 754 forms a coiled coil; it reads LAGQNNIINQLEREAKELSFNMPREEIE.

It belongs to the 7S seed storage protein family. As to quaternary structure, homotrimer. Expressed in seed (at protein level). Expressed in seed.

Functionally, seed storage protein. In Carya illinoinensis (Pecan), this protein is Vicilin Car i 2.0101.